The following is a 1602-amino-acid chain: MAP kinase-activating death domain protein (1602 aa).

Residues 13–267 (YLVIVGARHP…VPVSGQKRVD (255 aa)) form the uDENN domain. Positions 105 to 121 (PKEKAEGGAGPRGKEGA) are enriched in basic and acidic residues. The disordered stretch occupies residues 105–167 (PKEKAEGGAG…GKRRAKAGNR (63 aa)). A compositionally biased stretch (low complexity) spans 126–137 (ASEEAATESSES). Over residues 138-156 (GSTLQPPSADSTPDVNQSP) the composition is skewed to polar residues. S155 is subject to Phosphoserine. A compositionally biased stretch (basic residues) spans 157-166 (RGKRRAKAGN). The region spanning 288–428 (RFTLVDFPLH…ESLELKKHLK (141 aa)) is the cDENN domain. A dDENN domain is found at 430–564 (ALASMSLNTQ…LNPSNYAFQR (135 aa)). Disordered regions lie at residues 603–635 (ALSV…SSYS) and 676–840 (QPQK…NSTE). Residues 614 to 629 (SDPTDDSGSDSMDYDD) are compositionally biased toward acidic residues. S688 and S691 each carry phosphoserine. Positions 688-698 (SENSQENLPLR) are enriched in polar residues. Low complexity predominate over residues 699 to 711 (SSSSTTASSSPST). S778 bears the Phosphoserine mark. Over residues 789 to 803 (ESYTPRFSQHASGSR) the composition is skewed to polar residues. 3 positions are modified to phosphoserine: S812, S817, and S819. Over residues 826–839 (RASSPNSTVSNNST) the composition is skewed to low complexity. Phosphoserine is present on residues S857, S861, S895, S900, and S909. Disordered regions lie at residues 870–920 (KGAR…SSEN), 1030–1089 (KEPD…DTRS), and 1113–1231 (TEEK…RSSE). The span at 911-920 (QGRSSNSSEN) shows a compositional bias: polar residues. Phosphoserine is present on S1038. A phosphothreonine mark is found at T1040 and T1045. Residue S1089 is modified to Phosphoserine. The segment covering 1119 to 1134 (QISADSGVSLASASQR) has biased composition (polar residues). The span at 1151–1162 (SSSQDSEVSNSS) shows a compositional bias: low complexity. The segment covering 1191–1209 (SRATLSDSEIETNSATSTI) has biased composition (polar residues). Residue T1194 is modified to Phosphothreonine. Phosphoserine occurs at positions 1196 and 1225. Residues 1295–1370 (GMDQGPQEMI…GLVYSQQINE (76 aa)) enclose the Death domain.

It belongs to the MADD family. As to quaternary structure, interacts (via death domain) with TNFRSF1A (via death domain). Interacts with PIDD1. Interacts with YWHAZ. Interacts (via death domain) with KIF1B; links the motor KIF1B to Rab3-carrying vesicles in anterograde synaptic vesicle transport. Interacts with KIF1A. Interacts (via uDENN domain) with RAB3A, RAB3B, RAB3C and RAB3D; the GTP-bound form of the Rab proteins is preferred for interaction. As to expression, expressed in all tissues examined with the highest expression in brain.

It localises to the cell membrane. The protein resides in the cytoplasm. It is found in the cell projection. Its subcellular location is the axon. In terms of biological role, guanyl-nucleotide exchange factor that regulates small GTPases of the Rab family. Converts GDP-bound inactive form of RAB27A and RAB27B to the GTP-bound active forms. Converts GDP-bound inactive form of RAB3A, RAB3C and RAB3D to the GTP-bound active forms, GTPases involved in synaptic vesicle exocytosis and vesicle secretion. Plays a role in synaptic vesicle formation and in vesicle trafficking at the neuromuscular junction. Involved in up-regulating a post-docking step of synaptic exocytosis in central synapses. Probably by binding to the motor proteins KIF1B and KIF1A, mediates motor-dependent transport of GTP-RAB3A-positive vesicles to the presynaptic nerve terminals. Plays a role in TNFA-mediated activation of the MAPK pathway, including ERK1/2. May link TNFRSF1A with MAP kinase activation. May be involved in the regulation of TNFA-induced apoptosis. The chain is MAP kinase-activating death domain protein from Rattus norvegicus (Rat).